The primary structure comprises 113 residues: MCRFPTFLLIAIAITMLPTILSITCFVGKNSVVAEEKDFDYCATMKNISTKEITYSGRTGATRVFEKDANDLTINNCYIDFNDQTALTCYCRRSKCNKVVSSLQFDLMTIATK.

Residues 1–22 (MCRFPTFLLIAIAITMLPTILS) form the signal peptide. N-linked (GlcNAc...) asparagine glycosylation occurs at N47.

The protein resides in the secreted. This is an uncharacterized protein from Caenorhabditis elegans.